Consider the following 345-residue polypeptide: Protein RecA (345 aa).

ATP is bound at residue 66 to 73; it reads GPESSGKT.

It belongs to the RecA family.

It is found in the cytoplasm. Can catalyze the hydrolysis of ATP in the presence of single-stranded DNA, the ATP-dependent uptake of single-stranded DNA by duplex DNA, and the ATP-dependent hybridization of homologous single-stranded DNAs. It interacts with LexA causing its activation and leading to its autocatalytic cleavage. The protein is Protein RecA of Acidithiobacillus ferrooxidans (strain ATCC 23270 / DSM 14882 / CIP 104768 / NCIMB 8455) (Ferrobacillus ferrooxidans (strain ATCC 23270)).